The following is a 66-amino-acid chain: MADMPSVEPTRIDPKLLELLVCPLTKGRLEYDSARQELISRSAKLAYPIRDGIPIMLPEEARPLAD.

Belongs to the UPF0434 family.

The polypeptide is UPF0434 protein Mnod_1613 (Methylobacterium nodulans (strain LMG 21967 / CNCM I-2342 / ORS 2060)).